The primary structure comprises 380 residues: Protein kinase ORF15 (380 aa).

One can recognise a Protein kinase domain in the interval 93–371 (FIPVKVAGCL…LLIAQLTKFI (279 aa)). K118 contributes to the ATP binding site. The active-site Proton acceptor is D217.

The protein belongs to the protein kinase superfamily. Ser/Thr protein kinase family.

It carries out the reaction L-seryl-[protein] + ATP = O-phospho-L-seryl-[protein] + ADP + H(+). The catalysed reaction is L-threonyl-[protein] + ATP = O-phospho-L-threonyl-[protein] + ADP + H(+). In Ictalurid herpesvirus 1 (strain Auburn) (IcHV-1), this protein is Protein kinase ORF15 (ORF15).